We begin with the raw amino-acid sequence, 318 residues long: L-lactate dehydrogenase (318 aa).

4 residues coordinate NAD(+): Val14, Asp35, Lys40, and Tyr66. Residues Arg89 and 121-124 (NPVD) contribute to the substrate site. Position 144 (Ser144) interacts with NAD(+). 149–152 (DTAR) lines the substrate pocket. His176 functions as the Proton acceptor in the catalytic mechanism. Tyr220 bears the Phosphotyrosine mark. Thr229 is a binding site for substrate.

Belongs to the LDH/MDH superfamily. LDH family. As to quaternary structure, homotetramer.

It localises to the cytoplasm. The catalysed reaction is (S)-lactate + NAD(+) = pyruvate + NADH + H(+). Its pathway is fermentation; pyruvate fermentation to lactate; (S)-lactate from pyruvate: step 1/1. In terms of biological role, catalyzes the conversion of lactate to pyruvate. This chain is L-lactate dehydrogenase, found in Staphylococcus haemolyticus (strain JCSC1435).